Here is a 279-residue protein sequence, read N- to C-terminus: Coiled-coil domain-containing protein 106 (279 aa).

Residues Lys62 to Arg101 are a coiled coil. A compositionally biased stretch (basic and acidic residues) spans Arg109–Ser121. Residues Arg109–Gln173 form a disordered region. Residue Ser129 is modified to Phosphoserine. Positions Lys151–Phe164 match the Bipartite nuclear localization signal motif. The segment covering Lys151–Thr167 has biased composition (basic residues).

Interacts with p53/TP53.

The protein localises to the nucleus. Its function is as follows. Promotes the degradation of p53/TP53 protein and inhibits its transactivity. This is Coiled-coil domain-containing protein 106 (Ccdc106) from Mus musculus (Mouse).